Reading from the N-terminus, the 126-residue chain is FCS-Like Zinc finger 7 (126 aa).

Residues 72-116 (SFLVNCGFCKRGLAPGRDIYMYKGDAAFCSIECREQQMEHDEGKT) form an FLZ-type zinc finger.

The protein belongs to the FLZ family. In terms of assembly, interacts with KIN10 and KIN11 via its FLZ-type zinc finger domain. Interacts with KINB3 via its N-terminal part. Forms homodimer and heterodimer with FLZ1, FLZ2 and FLZ15 in vitro.

The protein resides in the cytoplasm. It localises to the nucleus. Its function is as follows. May act as an adapter to facilitate the interaction of SnRK1 complex with effector proteins, conferring tissue- and stimulus-type specific differences in the SnRK1 regulation pathway. The protein is FCS-Like Zinc finger 7 of Arabidopsis thaliana (Mouse-ear cress).